The sequence spans 144 residues: Cytochrome c oxidase subunit 4 isoform 1, mitochondrial (144 aa).

Topologically, residues 1–73 (SVVKSEDYTL…SFAEMNRGSN (73 aa)) are mitochondrial matrix. Position 4 is an N6-acetyllysine; alternate (K4). The residue at position 4 (K4) is an N6-succinyllysine; alternate. Phosphoserine is present on residues S31 and S33. At K35 the chain carries N6-acetyllysine; alternate. K35 bears the N6-succinyllysine; alternate mark. N6-acetyllysine is present on K42. A helical transmembrane segment spans residues 74–99 (EWKTVVGAAMFFIGFTAILIMLEKRY). Residues 100–144 (VYGPLPHTFDKEWVAMQTKRMLDLKVNPVDGLASKWDYEKKEWKK) lie on the Mitochondrial intermembrane side of the membrane.

This sequence belongs to the cytochrome c oxidase IV family. In terms of assembly, component of the cytochrome c oxidase (complex IV, CIV), a multisubunit enzyme composed of 14 subunits. The complex is composed of a catalytic core of 3 subunits MT-CO1, MT-CO2 and MT-CO3, encoded in the mitochondrial DNA, and 11 supernumerary subunits COX4I, COX5A, COX5B, COX6A, COX6B, COX6C, COX7A, COX7B, COX7C, COX8 and NDUFA4, which are encoded in the nuclear genome. The complex exists as a monomer or a dimer and forms supercomplexes (SCs) in the inner mitochondrial membrane with NADH-ubiquinone oxidoreductase (complex I, CI) and ubiquinol-cytochrome c oxidoreductase (cytochrome b-c1 complex, complex III, CIII), resulting in different assemblies (supercomplex SCI(1)III(2)IV(1) and megacomplex MCI(2)III(2)IV(2)). Interacts with PHB2; the interaction decreases in absence of SPHK2. Interacts with AFG1L. Interacts with ABCB7; this interaction allows the regulation of cellular iron homeostasis and cellular reactive oxygen species (ROS) levels in cardiomyocytes. Interacts with FLVCR2; this interaction occurs in the absence of heme and is disrupted upon heme binding. Interacts with IRGC.

The protein localises to the mitochondrion inner membrane. Its pathway is energy metabolism; oxidative phosphorylation. Component of the cytochrome c oxidase, the last enzyme in the mitochondrial electron transport chain which drives oxidative phosphorylation. The respiratory chain contains 3 multisubunit complexes succinate dehydrogenase (complex II, CII), ubiquinol-cytochrome c oxidoreductase (cytochrome b-c1 complex, complex III, CIII) and cytochrome c oxidase (complex IV, CIV), that cooperate to transfer electrons derived from NADH and succinate to molecular oxygen, creating an electrochemical gradient over the inner membrane that drives transmembrane transport and the ATP synthase. Cytochrome c oxidase is the component of the respiratory chain that catalyzes the reduction of oxygen to water. Electrons originating from reduced cytochrome c in the intermembrane space (IMS) are transferred via the dinuclear copper A center (CU(A)) of subunit 2 and heme A of subunit 1 to the active site in subunit 1, a binuclear center (BNC) formed by heme A3 and copper B (CU(B)). The BNC reduces molecular oxygen to 2 water molecules using 4 electrons from cytochrome c in the IMS and 4 protons from the mitochondrial matrix. The sequence is that of Cytochrome c oxidase subunit 4 isoform 1, mitochondrial (COX4I1) from Pithecia pithecia (White-faced saki).